We begin with the raw amino-acid sequence, 404 residues long: Protein translocase subunit SecD (404 aa).

6 helical membrane-spanning segments follow: residues 7 to 27, 239 to 259, 262 to 282, 283 to 303, 330 to 350, and 357 to 377; these read HYIWLFLVIFVPALILYFNKV, LIALGVISVFMIAIYKIPGIV, IALLINGVLVLGLLSGIGAAL, TLPGIAGFILTLGMAVDSNVI, FPAIIDGNITTLLVAAVLFFL, and GFAVTLSLGVVATIITGVFVS.

Belongs to the SecD/SecF family. SecD subfamily. Forms a complex with SecF. Part of the essential Sec protein translocation apparatus which comprises SecA, SecYEG and auxiliary proteins SecDF. Other proteins may also be involved.

It is found in the cell inner membrane. Part of the Sec protein translocase complex. Interacts with the SecYEG preprotein conducting channel. SecDF uses the proton motive force (PMF) to complete protein translocation after the ATP-dependent function of SecA. The chain is Protein translocase subunit SecD from Leptotrichia buccalis (strain ATCC 14201 / DSM 1135 / JCM 12969 / NCTC 10249 / C-1013-b).